The sequence spans 492 residues: Cell division protein FtsA (492 aa).

2 disordered regions span residues 288–307 (GEETPSQNVQIPTTGSDGHE) and 429–458 (YTRTAHQSSPTPHIHSSPTERNLSDLKAPS). The span at 291-303 (TPSQNVQIPTTGS) shows a compositional bias: polar residues. Residues 436–447 (SSPTPHIHSSPT) are compositionally biased toward low complexity.

Belongs to the FtsA/MreB family. In terms of assembly, self-interacts. Interacts with FtsZ.

Its subcellular location is the cell inner membrane. In terms of biological role, cell division protein that is involved in the assembly of the Z ring. May serve as a membrane anchor for the Z ring. This Helicobacter pylori (strain ATCC 700392 / 26695) (Campylobacter pylori) protein is Cell division protein FtsA.